The primary structure comprises 232 residues: Probable proteasome subunit alpha type-3 (232 aa).

Belongs to the peptidase T1A family. As to quaternary structure, the 26S proteasome consists of a 20S proteasome core and two 19S regulatory subunits. The 20S proteasome core is composed of 28 subunits that are arranged in four stacked rings, resulting in a barrel-shaped structure. The two end rings are each formed by seven alpha subunits, and the two central rings are each formed by seven beta subunits. The catalytic chamber with the active sites is on the inside of the barrel.

It is found in the cytoplasm. Its subcellular location is the nucleus. Functionally, the proteasome degrades poly-ubiquitinated proteins in the cytoplasm and in the nucleus. It is essential for the regulated turnover of proteins and for the removal of misfolded proteins. The proteasome is a multicatalytic proteinase complex that is characterized by its ability to cleave peptides with Arg, Phe, Tyr, Leu, and Glu adjacent to the leaving group at neutral or slightly basic pH. It has an ATP-dependent proteolytic activity. This Encephalitozoon cuniculi (strain GB-M1) (Microsporidian parasite) protein is Probable proteasome subunit alpha type-3 (PRE9).